The sequence spans 194 residues: MNLVLASTSPRRKELLTHIGLGRSDFTFEQVAPDIDETPRSGELPRDYVQRLAAEKAQAGLALCSDMSQPAVLGSDTIVVLENEILGKPVDDADAKRVLRALSGRAHTVMTAVALANANHTAMRLVETLVRFCVLSDADIDAYVASQEPMDKAGSYGIQGLGGCFVESIDGSYSCVVGLPLVETRQLLSEAGII.

The active-site Proton acceptor is the D76.

It belongs to the Maf family. YhdE subfamily. A divalent metal cation is required as a cofactor.

Its subcellular location is the cytoplasm. The catalysed reaction is dTTP + H2O = dTMP + diphosphate + H(+). It catalyses the reaction UTP + H2O = UMP + diphosphate + H(+). Nucleoside triphosphate pyrophosphatase that hydrolyzes dTTP and UTP. May have a dual role in cell division arrest and in preventing the incorporation of modified nucleotides into cellular nucleic acids. In Shewanella oneidensis (strain ATCC 700550 / JCM 31522 / CIP 106686 / LMG 19005 / NCIMB 14063 / MR-1), this protein is dTTP/UTP pyrophosphatase.